Here is a 271-residue protein sequence, read N- to C-terminus: Solute carrier family 66 member 2 (271 aa).

3 helical membrane passes run 7-27 (GWLL…AMVF), 49-69 (FSTH…LFWF), and 72-92 (HFES…LLML). Positions 14–80 (HQLVSWVAAG…RHFESPLLWQ (67 aa)) constitute a PQ-loop 1 domain. The residue at position 110 (serine 110) is a Phosphoserine. The next 3 helical transmembrane spans lie at 145–165 (DYVQ…YLSI), 168–188 (ALFV…LGVP), and 232–252 (VCGL…YAFA). One can recognise a PQ-loop 2 domain in the interval 178 to 233 (AVLTEAMLGVPQLYRNYCHRSTEGMSLKMVLMWTSGDTFKTAYFLLNGAPLQFSVC).

The protein localises to the membrane. The polypeptide is Solute carrier family 66 member 2 (Slc66a2) (Mus musculus (Mouse)).